Consider the following 347-residue polypeptide: UDP-3-O-acylglucosamine N-acyltransferase (347 aa).

Histidine 241 functions as the Proton acceptor in the catalytic mechanism.

Belongs to the transferase hexapeptide repeat family. LpxD subfamily. Homotrimer.

It carries out the reaction a UDP-3-O-[(3R)-3-hydroxyacyl]-alpha-D-glucosamine + a (3R)-hydroxyacyl-[ACP] = a UDP-2-N,3-O-bis[(3R)-3-hydroxyacyl]-alpha-D-glucosamine + holo-[ACP] + H(+). It participates in bacterial outer membrane biogenesis; LPS lipid A biosynthesis. In terms of biological role, catalyzes the N-acylation of UDP-3-O-acylglucosamine using 3-hydroxyacyl-ACP as the acyl donor. Is involved in the biosynthesis of lipid A, a phosphorylated glycolipid that anchors the lipopolysaccharide to the outer membrane of the cell. The sequence is that of UDP-3-O-acylglucosamine N-acyltransferase from Nitrosococcus oceani (strain ATCC 19707 / BCRC 17464 / JCM 30415 / NCIMB 11848 / C-107).